We begin with the raw amino-acid sequence, 283 residues long: Pantothenate synthetase (283 aa).

ATP is bound at residue 30–37; that stretch reads MGNLHAGH. Residue H37 is the Proton donor of the active site. A (R)-pantoate-binding site is contributed by Q61. Position 61 (Q61) interacts with beta-alanine. 149 to 152 is an ATP binding site; it reads GEKD. Q155 is a (R)-pantoate binding site. Residues V178 and 186 to 189 contribute to the ATP site; that span reads LSSR.

It belongs to the pantothenate synthetase family. Homodimer.

It is found in the cytoplasm. The enzyme catalyses (R)-pantoate + beta-alanine + ATP = (R)-pantothenate + AMP + diphosphate + H(+). Its pathway is cofactor biosynthesis; (R)-pantothenate biosynthesis; (R)-pantothenate from (R)-pantoate and beta-alanine: step 1/1. Catalyzes the condensation of pantoate with beta-alanine in an ATP-dependent reaction via a pantoyl-adenylate intermediate. The protein is Pantothenate synthetase of Pseudomonas aeruginosa (strain UCBPP-PA14).